Reading from the N-terminus, the 94-residue chain is UPF0298 protein SEQ_1830 (94 aa).

Belongs to the UPF0298 family.

Its subcellular location is the cytoplasm. This Streptococcus equi subsp. equi (strain 4047) protein is UPF0298 protein SEQ_1830.